The following is a 631-amino-acid chain: E3 ubiquitin-protein ligase Zswim2 (631 aa).

The SWIM-type zinc finger occupies 54 to 87 (FRVLLGNPHECSCPTFLKRGELCKHICWVLLKKF). The interval 139–348 (KDINAGDICP…APGYQCRLCL (210 aa)) is UBE2D1-binding. The RING-type 1 zinc-finger motif lies at 147-199 (CPICQEVLLEKKLPVTFCRFGCGNNVHIKCMRILANYQDTGSDSSVLRCPLCR). The ZZ-type zinc finger occupies 230-281 (HLGIPCNNCNQLPIEGRCYKCTECVEYHLCQECFDSCCHSSHAFASREKRNQ). Zn(2+) is bound by residues cysteine 235, cysteine 238, cysteine 250, cysteine 253, cysteine 259, cysteine 262, histidine 268, and histidine 271. The RING-type 2 zinc finger occupies 344-386 (CRLCLKSFSFGQYTRLLPCTHKFHRKCIDNWLLHKCNSCPIDR). A disordered region spans residues 589–614 (SKRQNNSMGKVRQKLGHPPRRPAYPP). Basic residues predominate over residues 599-608 (VRQKLGHPPR).

Dimer. Interacts with UBE2D1. Post-translationally, polyubiquitinated. Polyubiquitination is followed by degradation via the proteasome. As to expression, expressed only in testis.

The catalysed reaction is S-ubiquitinyl-[E2 ubiquitin-conjugating enzyme]-L-cysteine + [acceptor protein]-L-lysine = [E2 ubiquitin-conjugating enzyme]-L-cysteine + N(6)-ubiquitinyl-[acceptor protein]-L-lysine.. E3 ubiquitin-protein ligase involved in the regulation of Fas-, DR3- and DR4-mediated apoptosis. Functions in conjunction with the UBE2D1, UBE2D3 and UBE2E1 E2 ubiquitin-conjugating enzymes. This chain is E3 ubiquitin-protein ligase Zswim2 (Zswim2), found in Mus musculus (Mouse).